Reading from the N-terminus, the 235-residue chain is Orotidine 5'-phosphate decarboxylase (235 aa).

Substrate is bound by residues Asp-10, Lys-33, 60–69, Thr-123, Arg-185, Gln-194, Gly-214, and Arg-215; that span reads DLKMHDIPNT. The active-site Proton donor is the Lys-62.

Belongs to the OMP decarboxylase family. Type 1 subfamily. As to quaternary structure, homodimer.

The enzyme catalyses orotidine 5'-phosphate + H(+) = UMP + CO2. It participates in pyrimidine metabolism; UMP biosynthesis via de novo pathway; UMP from orotate: step 2/2. In terms of biological role, catalyzes the decarboxylation of orotidine 5'-monophosphate (OMP) to uridine 5'-monophosphate (UMP). The polypeptide is Orotidine 5'-phosphate decarboxylase (Lactobacillus acidophilus (strain ATCC 700396 / NCK56 / N2 / NCFM)).